We begin with the raw amino-acid sequence, 247 residues long: Adenosylcobinamide-GDP ribazoletransferase (247 aa).

The next 5 helical transmembrane spans lie at 34-54 (IITFPLIGLLLGAISGLVFMV), 59-79 (CGVPLAALFSVLVLALMTGGF), 113-133 (GGLALIFVVLAKILVLSELAL), 138-158 (ILASLAAACAVSRGTAALLMY), and 194-214 (VLLPGMHGVAAMVVTMVAIFI).

The protein belongs to the CobS family. It depends on Mg(2+) as a cofactor.

The protein localises to the cell inner membrane. It carries out the reaction alpha-ribazole + adenosylcob(III)inamide-GDP = adenosylcob(III)alamin + GMP + H(+). The enzyme catalyses alpha-ribazole 5'-phosphate + adenosylcob(III)inamide-GDP = adenosylcob(III)alamin 5'-phosphate + GMP + H(+). The protein operates within cofactor biosynthesis; adenosylcobalamin biosynthesis; adenosylcobalamin from cob(II)yrinate a,c-diamide: step 7/7. Functionally, joins adenosylcobinamide-GDP and alpha-ribazole to generate adenosylcobalamin (Ado-cobalamin). Also synthesizes adenosylcobalamin 5'-phosphate from adenosylcobinamide-GDP and alpha-ribazole 5'-phosphate. This chain is Adenosylcobinamide-GDP ribazoletransferase, found in Escherichia coli O7:K1 (strain IAI39 / ExPEC).